Here is a 152-residue protein sequence, read N- to C-terminus: Urease accessory protein UreE (152 aa).

The protein belongs to the UreE family.

It is found in the cytoplasm. Involved in urease metallocenter assembly. Binds nickel. Probably functions as a nickel donor during metallocenter assembly. This is Urease accessory protein UreE from Enterobacter sp. (strain 638).